The chain runs to 524 residues: Chromosomal replication initiator protein DnaA (524 aa).

Residues 1 to 85 are domain I, interacts with DnaA modulators; that stretch reads MSQNSSSLLE…TRVLSLRMGR (85 aa). Residues 85–182 form a domain II region; sequence RSFSLAVSVE…TPAHNPNREV (98 aa). The tract at residues 95 to 183 is disordered; that stretch reads PEQEIPETPA…PAHNPNREVS (89 aa). The span at 148 to 158 shows a compositional bias: pro residues; it reads APEPHPAPIAD. The segment at 183–399 is domain III, AAA+ region; it reads SLNPKYTFES…GALIRVSAYS (217 aa). ATP contacts are provided by Gly-227, Gly-229, Lys-230, and Thr-231. The domain IV, binds dsDNA stretch occupies residues 400 to 524; the sequence is SLINQPIDKE…TQLIKSRGRN (125 aa).

It belongs to the DnaA family. As to quaternary structure, oligomerizes as a right-handed, spiral filament on DNA at oriC.

Its subcellular location is the cytoplasm. In terms of biological role, plays an essential role in the initiation and regulation of chromosomal replication. ATP-DnaA binds to the origin of replication (oriC) to initiate formation of the DNA replication initiation complex once per cell cycle. Binds the DnaA box (a 9 base pair repeat at the origin) and separates the double-stranded (ds)DNA. Forms a right-handed helical filament on oriC DNA; dsDNA binds to the exterior of the filament while single-stranded (ss)DNA is stabiized in the filament's interior. The ATP-DnaA-oriC complex binds and stabilizes one strand of the AT-rich DNA unwinding element (DUE), permitting loading of DNA polymerase. After initiation quickly degrades to an ADP-DnaA complex that is not apt for DNA replication. Binds acidic phospholipids. In Corynebacterium glutamicum (strain ATCC 13032 / DSM 20300 / JCM 1318 / BCRC 11384 / CCUG 27702 / LMG 3730 / NBRC 12168 / NCIMB 10025 / NRRL B-2784 / 534), this protein is Chromosomal replication initiator protein DnaA.